The sequence spans 549 residues: Oxygen-dependent choline dehydrogenase (549 aa).

4–33 (DFVIIGSGSAGSAMAYRLSEDGRYSVIVIE) is a binding site for FAD. H465 serves as the catalytic Proton acceptor.

It belongs to the GMC oxidoreductase family. Requires FAD as cofactor.

The enzyme catalyses choline + A = betaine aldehyde + AH2. It catalyses the reaction betaine aldehyde + NAD(+) + H2O = glycine betaine + NADH + 2 H(+). Its pathway is amine and polyamine biosynthesis; betaine biosynthesis via choline pathway; betaine aldehyde from choline (cytochrome c reductase route): step 1/1. Functionally, involved in the biosynthesis of the osmoprotectant glycine betaine. Catalyzes the oxidation of choline to betaine aldehyde and betaine aldehyde to glycine betaine at the same rate. In Brucella melitensis biotype 1 (strain ATCC 23456 / CCUG 17765 / NCTC 10094 / 16M), this protein is Oxygen-dependent choline dehydrogenase.